A 206-amino-acid polypeptide reads, in one-letter code: Stage III sporulation protein AF (206 aa).

2 helical membrane passes run 1-21 and 34-54; these read MSFL…AIVI and AKMV…FKLF.

It localises to the cell membrane. In Bacillus subtilis (strain 168), this protein is Stage III sporulation protein AF (spoIIIAF).